Consider the following 476-residue polypeptide: Eukaryotic translation initiation factor 3 subunit L (476 aa).

Residues 257-452 enclose the PCI domain; it reads DAIRMFSHIL…DLDYALEKDL (196 aa).

It belongs to the eIF-3 subunit L family. As to quaternary structure, component of the eukaryotic translation initiation factor 3 (eIF-3) complex.

It is found in the cytoplasm. Functionally, component of the eukaryotic translation initiation factor 3 (eIF-3) complex, which is involved in protein synthesis of a specialized repertoire of mRNAs and, together with other initiation factors, stimulates binding of mRNA and methionyl-tRNAi to the 40S ribosome. The eIF-3 complex specifically targets and initiates translation of a subset of mRNAs involved in cell proliferation. This chain is Eukaryotic translation initiation factor 3 subunit L, found in Aspergillus terreus (strain NIH 2624 / FGSC A1156).